We begin with the raw amino-acid sequence, 397 residues long: Exodeoxyribonuclease 7 large subunit (397 aa).

It belongs to the XseA family. In terms of assembly, heterooligomer composed of large and small subunits.

It is found in the cytoplasm. The enzyme catalyses Exonucleolytic cleavage in either 5'- to 3'- or 3'- to 5'-direction to yield nucleoside 5'-phosphates.. Its function is as follows. Bidirectionally degrades single-stranded DNA into large acid-insoluble oligonucleotides, which are then degraded further into small acid-soluble oligonucleotides. The protein is Exodeoxyribonuclease 7 large subunit of Anaplasma marginale (strain Florida).